Reading from the N-terminus, the 1141-residue chain is DNA-directed RNA polymerase subunit beta (1141 aa).

It belongs to the RNA polymerase beta chain family. In terms of assembly, the RNAP catalytic core consists of 2 alpha, 1 beta, 1 beta' and 1 omega subunit. When a sigma factor is associated with the core the holoenzyme is formed, which can initiate transcription.

The enzyme catalyses RNA(n) + a ribonucleoside 5'-triphosphate = RNA(n+1) + diphosphate. Functionally, DNA-dependent RNA polymerase catalyzes the transcription of DNA into RNA using the four ribonucleoside triphosphates as substrates. The polypeptide is DNA-directed RNA polymerase subunit beta (Frankia alni (strain DSM 45986 / CECT 9034 / ACN14a)).